The sequence spans 173 residues: Lipid A deacylase PagL (173 aa).

Positions 1–23 (MKKLLPLAVLAALSSVHVASAQA) are cleaved as a signal peptide. The Periplasmic segment spans residues 25-28 (DVSA). The beta stranded transmembrane segment at 29 to 32 (AVGA) threads the bilayer. Residue threonine 33 is a topological domain, periplasmic. A beta stranded membrane pass occupies residues 34 to 49 (GQSGMTYRLGLSWDWD). Residues 50-56 (KSWWQTS) lie on the Extracellular side of the membrane. A beta stranded transmembrane segment spans residues 57–71 (TGRLTGYWDAGYTYW). The Periplasmic portion of the chain corresponds to 72–73 (EG). Residues 74–89 (GDEGAGKHSLSFAPVF) form a beta stranded membrane-spanning segment. Residue valine 90 is a topological domain, extracellular. Residues 91-93 (YEF) traverse the membrane as a beta stranded segment. The Periplasmic segment spans residues 94-95 (AG). The beta stranded transmembrane segment at 96 to 98 (DSI) threads the bilayer. The Extracellular portion of the chain corresponds to 99-100 (KP). A beta stranded transmembrane segment spans residues 101-115 (FIEAGIGVAAFSGTR). The Periplasmic segment spans residues 116–117 (VG). A beta stranded membrane pass occupies residues 118 to 128 (DQNLGSSLNFE). Topologically, residues 129-138 (DRIGAGLKFA) are extracellular. The beta stranded transmembrane segment at 139–148 (NGQSVGVRAI) threads the bilayer. Active-site charge relay system residues include histidine 149, serine 151, and glutamate 163. The Periplasmic portion of the chain corresponds to 149–173 (HYSNAGLKQPNDGIESYSLFYKIPI).

Belongs to the PagL family. As to quaternary structure, homodimer.

The protein resides in the cell outer membrane. The catalysed reaction is a 3-(acyloxy)acyl derivative of bacterial toxin + H2O = a 3-hydroxyacyl derivative of bacterial toxin + a fatty acid + H(+). Decreased activity at low temperatures (15 or 21 degrees Celsius). Its function is as follows. Has lipid A 3-O-deacylase activity. Hydrolyzes the ester bond at the 3 position of lipid A, a bioactive component of lipopolysaccharide (LPS), thereby releasing the primary fatty acyl moiety. Lacks fatty acyl chain-length specificity as removes both 3-OH C10 and 3-OH C14 fatty acids from lipid A. This is Lipid A deacylase PagL from Pseudomonas aeruginosa (strain ATCC 15692 / DSM 22644 / CIP 104116 / JCM 14847 / LMG 12228 / 1C / PRS 101 / PAO1).